The chain runs to 354 residues: Lysophosphatidic acid receptor 3 (354 aa).

The Extracellular portion of the chain corresponds to 1 to 31 (MNECHYDKRMDFFYNRSNTDTADEWTGTKLV). N15 is a glycosylation site (N-linked (GlcNAc...) asparagine). Residues 32–52 (IVLCVGTFFCLFIFFSNSLVI) traverse the membrane as a helical segment. At 53–67 (AAVITNRKFHFPFYY) the chain is on the cytoplasmic side. A helical membrane pass occupies residues 68–88 (LLANLAAADFFAGIAYVFLMF). Over 89 to 101 (NTGPVSKTLTVNR) the chain is Extracellular. The helical transmembrane segment at 102-124 (WLLRQGLLDTSLTASLANLLVIA) threads the bilayer. The Cytoplasmic segment spans residues 125 to 146 (VERHMSIMRMRIHSNLTKKRVT). Residues 147–167 (LLILLVWAIAIFMGAVPTLGW) traverse the membrane as a helical segment. The Extracellular portion of the chain corresponds to 168–186 (NCLCNISACSSLAPIYSRS). N-linked (GlcNAc...) asparagine glycosylation occurs at N172. The chain crosses the membrane as a helical span at residues 187–207 (YLIFWTVSNLLAFFIMVVVYV). Topologically, residues 208 to 240 (RIYMYVKRKTNVLSPHTSGSISRRRAPMKLMKT) are cytoplasmic. A helical transmembrane segment spans residues 241–261 (VMTVLGAFVVCWTPGLVVLLL). Residues 262-276 (DGLNCKQCNVQHVKR) are Extracellular-facing. The helical transmembrane segment at 277–295 (WFLLLALLNSVMNPIIYSY) threads the bilayer. Residues 296 to 354 (KDEDMYNTMRKMICCAPHDSNAERHPSRIPSTIHSRSDTGSQYLEDSISQGQVCNKSSS) are Cytoplasmic-facing. Residue C309 is the site of S-palmitoyl cysteine attachment.

The protein belongs to the G-protein coupled receptor 1 family.

Its subcellular location is the cell membrane. Receptor for lysophosphatidic acid (LPA), a mediator of diverse cellular activities. Seems to be coupled to the G(i)/G(o) and G(q) families of heteromeric G proteins. The sequence is that of Lysophosphatidic acid receptor 3 (Lpar3) from Rattus norvegicus (Rat).